The sequence spans 337 residues: 4-hydroxythreonine-4-phosphate dehydrogenase (337 aa).

Residues H138 and T139 each coordinate substrate. 3 residues coordinate a divalent metal cation: H168, H212, and H267. Substrate-binding residues include K275, N284, and R293.

It belongs to the PdxA family. Homodimer. Requires Zn(2+) as cofactor. It depends on Mg(2+) as a cofactor. Co(2+) is required as a cofactor.

It is found in the cytoplasm. It catalyses the reaction 4-(phosphooxy)-L-threonine + NAD(+) = 3-amino-2-oxopropyl phosphate + CO2 + NADH. It functions in the pathway cofactor biosynthesis; pyridoxine 5'-phosphate biosynthesis; pyridoxine 5'-phosphate from D-erythrose 4-phosphate: step 4/5. Its function is as follows. Catalyzes the NAD(P)-dependent oxidation of 4-(phosphooxy)-L-threonine (HTP) into 2-amino-3-oxo-4-(phosphooxy)butyric acid which spontaneously decarboxylates to form 3-amino-2-oxopropyl phosphate (AHAP). The protein is 4-hydroxythreonine-4-phosphate dehydrogenase of Beijerinckia indica subsp. indica (strain ATCC 9039 / DSM 1715 / NCIMB 8712).